An 83-amino-acid chain; its full sequence is Probable calcium-binding protein CML29 (83 aa).

2 consecutive EF-hand domains span residues threonine 5–valine 40 and aspartate 43–leucine 75. Ca(2+)-binding residues include aspartate 18, asparagine 20, aspartate 22, lysine 24, glutamate 29, aspartate 53, aspartate 55, aspartate 57, asparagine 59, and glutamate 64.

Its function is as follows. Potential calcium sensor. In Arabidopsis thaliana (Mouse-ear cress), this protein is Probable calcium-binding protein CML29 (CML29).